The following is a 333-amino-acid chain: 4-hydroxythreonine-4-phosphate dehydrogenase (333 aa).

Positions 133 and 134 each coordinate substrate. His169, His214, and His269 together coordinate a divalent metal cation. Substrate contacts are provided by Lys277, Asn286, and Arg295.

The protein belongs to the PdxA family. As to quaternary structure, homodimer. It depends on Zn(2+) as a cofactor. The cofactor is Mg(2+). Requires Co(2+) as cofactor.

It is found in the cytoplasm. The enzyme catalyses 4-(phosphooxy)-L-threonine + NAD(+) = 3-amino-2-oxopropyl phosphate + CO2 + NADH. It participates in cofactor biosynthesis; pyridoxine 5'-phosphate biosynthesis; pyridoxine 5'-phosphate from D-erythrose 4-phosphate: step 4/5. Catalyzes the NAD(P)-dependent oxidation of 4-(phosphooxy)-L-threonine (HTP) into 2-amino-3-oxo-4-(phosphooxy)butyric acid which spontaneously decarboxylates to form 3-amino-2-oxopropyl phosphate (AHAP). This Caulobacter vibrioides (strain ATCC 19089 / CIP 103742 / CB 15) (Caulobacter crescentus) protein is 4-hydroxythreonine-4-phosphate dehydrogenase.